We begin with the raw amino-acid sequence, 211 residues long: Thiamine-phosphate synthase (211 aa).

Residues 37 to 41 and Asn-69 each bind 4-amino-2-methyl-5-(diphosphooxymethyl)pyrimidine; that span reads QLRIK. Asp-70 and Asp-89 together coordinate Mg(2+). Ser-108 is a 4-amino-2-methyl-5-(diphosphooxymethyl)pyrimidine binding site. Residue 134-136 coordinates 2-[(2R,5Z)-2-carboxy-4-methylthiazol-5(2H)-ylidene]ethyl phosphate; the sequence is TQT. Lys-137 provides a ligand contact to 4-amino-2-methyl-5-(diphosphooxymethyl)pyrimidine. Residues Gly-166 and 186–187 each bind 2-[(2R,5Z)-2-carboxy-4-methylthiazol-5(2H)-ylidene]ethyl phosphate; that span reads VS.

It belongs to the thiamine-phosphate synthase family. Requires Mg(2+) as cofactor.

It carries out the reaction 2-[(2R,5Z)-2-carboxy-4-methylthiazol-5(2H)-ylidene]ethyl phosphate + 4-amino-2-methyl-5-(diphosphooxymethyl)pyrimidine + 2 H(+) = thiamine phosphate + CO2 + diphosphate. The catalysed reaction is 2-(2-carboxy-4-methylthiazol-5-yl)ethyl phosphate + 4-amino-2-methyl-5-(diphosphooxymethyl)pyrimidine + 2 H(+) = thiamine phosphate + CO2 + diphosphate. The enzyme catalyses 4-methyl-5-(2-phosphooxyethyl)-thiazole + 4-amino-2-methyl-5-(diphosphooxymethyl)pyrimidine + H(+) = thiamine phosphate + diphosphate. It functions in the pathway cofactor biosynthesis; thiamine diphosphate biosynthesis; thiamine phosphate from 4-amino-2-methyl-5-diphosphomethylpyrimidine and 4-methyl-5-(2-phosphoethyl)-thiazole: step 1/1. Functionally, condenses 4-methyl-5-(beta-hydroxyethyl)thiazole monophosphate (THZ-P) and 2-methyl-4-amino-5-hydroxymethyl pyrimidine pyrophosphate (HMP-PP) to form thiamine monophosphate (TMP). The sequence is that of Thiamine-phosphate synthase from Klebsiella pneumoniae subsp. pneumoniae (strain ATCC 700721 / MGH 78578).